A 177-amino-acid polypeptide reads, in one-letter code: FMRFamide-like neuropeptides 7 (177 aa).

A signal peptide spans 1-19; the sequence is MLGSRFLLLALGLLVLVLA. The propeptide occupies 20–49; sequence EESAEQQVQEPTELEKSGEQLSEEDLIDEQ. The interval 25–106 is disordered; the sequence is QQVQEPTELE…RSSMVRFGKR (82 aa). Phenylalanine amide occurs at positions 62, 75, 89, 103, 117, and 130. L143 carries the post-translational modification Leucine amide. F157 bears the Phenylalanine amide mark. Residues 161–177 constitute a propeptide that is removed on maturation; sequence SMEFEMQSNEKNIEDSE.

The protein belongs to the FARP (FMRFamide related peptide) family. In terms of tissue distribution, expressed in the ASI sensory neurons, the ALA interneuron and the AVG interneuron from where secretion occurs. Expression in the ASI neurons is necessary and sufficient to maintain serotonin-induced fat loss.

The protein resides in the secreted. Functionally, FMRFamide-like neuropeptides. Stimulates serotonin-induced fat loss by binding to and activating the npr-22 receptor which leads to induction of the atgl-1 lipase and subsequent fat loss. Together with atfs-1, negatively regulates the expression of the transcription regulator hlh-11, to promote expression of atgl-1, and thus atgl-1-dependent fat oxidation in response to mitochondrial stress. Its function is as follows. TPMQRSSMVRF-amide: Acts as a ligand for the npr-22 receptor in vitro. SPMQRSSMVRF-amide: Acts as a ligand for the npr-22 receptor in vitro. In terms of biological role, acts as a ligand for the npr-22 receptor in vitro. This is FMRFamide-like neuropeptides 7 from Caenorhabditis elegans.